A 410-amino-acid chain; its full sequence is D-3-phosphoglycerate dehydrogenase (410 aa).

NAD(+) contacts are provided by residues His-161–Ile-162, Asp-181, Ala-238–Arg-240, and Asp-264. Arg-240 is a catalytic residue. Glu-269 is a catalytic residue. Residue His-292 is the Proton donor of the active site. His-292–Gly-295 is a binding site for NAD(+). The ACT domain maps to Arg-339–Tyr-410.

The protein belongs to the D-isomer specific 2-hydroxyacid dehydrogenase family. Homotetramer.

It catalyses the reaction (2R)-3-phosphoglycerate + NAD(+) = 3-phosphooxypyruvate + NADH + H(+). It carries out the reaction (R)-2-hydroxyglutarate + NAD(+) = 2-oxoglutarate + NADH + H(+). The protein operates within amino-acid biosynthesis; L-serine biosynthesis; L-serine from 3-phospho-D-glycerate: step 1/3. Its activity is regulated as follows. In bacteria displays feedback inhibition by L-serine. Its function is as follows. Catalyzes the reversible oxidation of 3-phospho-D-glycerate to 3-phosphonooxypyruvate, the first step of the phosphorylated L-serine biosynthesis pathway. Also catalyzes the reversible oxidation of 2-hydroxyglutarate to 2-oxoglutarate. The polypeptide is D-3-phosphoglycerate dehydrogenase (serA) (Escherichia coli O6:H1 (strain CFT073 / ATCC 700928 / UPEC)).